A 466-amino-acid chain; its full sequence is Uridine kinase-like protein 3 (466 aa).

The tract at residues 41 to 246 (HGQPFVIGVA…IVQHIHTKLG (206 aa)) is uridine kinase. Positions 256-466 (NLYVIQSTFQ…GDRYFGTDDE (211 aa)) are uracil phosphoribosyltransferase. Residues Lys-280, Arg-289, and 323-326 (CKKL) contribute to the GTP site. Residues Arg-333 and Arg-358 each contribute to the 5-phospho-alpha-D-ribose 1-diphosphate site. Arg-378 is a binding site for GTP. 5-phospho-alpha-D-ribose 1-diphosphate contacts are provided by residues Asp-384, 389 to 392 (TGNS), and Glu-455. Residue 454–456 (GEF) coordinates uracil.

It in the N-terminal section; belongs to the uridine kinase family. The protein in the C-terminal section; belongs to the UPRTase family. Mg(2+) serves as cofactor.

The enzyme catalyses UMP + diphosphate = 5-phospho-alpha-D-ribose 1-diphosphate + uracil. It carries out the reaction cytidine + ATP = CMP + ADP + H(+). The catalysed reaction is uridine + ATP = UMP + ADP + H(+). It functions in the pathway pyrimidine metabolism; UMP biosynthesis via salvage pathway; UMP from uracil: step 1/1. It participates in pyrimidine metabolism; CTP biosynthesis via salvage pathway; CTP from cytidine: step 1/3. The protein operates within pyrimidine metabolism; UMP biosynthesis via salvage pathway; UMP from uridine: step 1/1. With respect to regulation, allosterically activated by GTP. In terms of biological role, involved in the pyrimidine salvage pathway. The uracil phosphoribosyltransferase (UPRT) activity, that catalyzes the conversion of uracil and 5-phospho-alpha-D-ribose 1-diphosphate (PRPP) to UMP and diphosphate, is unsure. The polypeptide is Uridine kinase-like protein 3 (UKL3) (Arabidopsis thaliana (Mouse-ear cress)).